The sequence spans 1956 residues: Probable cation-transporting ATPase 1 (1956 aa).

Over 1-35 the chain is Cytoplasmic; it reads MHLMCTGLRNEKLINDRKILYGECNLNIKSDSFII. A helical transmembrane segment spans residues 36–58; it reads LLFKEIMNPFFIFQIFAMIVWSL. At 59 to 61 the chain is on the extracellular side; it reads DNY. A helical membrane pass occupies residues 62 to 80; sequence IEYTISILFITSISIILEL. Topologically, residues 81 to 407 are cytoplasmic; the sequence is KNTIKNQKKI…KKELNLINDS (327 aa). The chain crosses the membrane as a helical span at residues 408-427; the sequence is YKFLIILIIYALFSVFILLY. Residues 428–440 are Extracellular-facing; the sequence is ITLSNNEYTNHII. The helical transmembrane segment at 441-462 threads the bilayer; that stretch reads IKCLDIITDAIPPALPTTLTVG. Over 463-1818 the chain is Cytoplasmic; sequence ISIAISRLKK…SLVNSFQLFK (1356 aa). The 4-aspartylphosphate intermediate role is filled by Asp-496. A disordered region spans residues 901-938; it reads YGNNNDDNNDDDNNNDDDNNDDNNNDDNNNDDNNDDNN. A compositionally biased stretch (acidic residues) spans 907–935; it reads DNNDDDNNNDDDNNDDNNNDDNNNDDNND. The Mg(2+) site is built by Asp-1760 and Asp-1764. A helical membrane pass occupies residues 1819–1837; sequence FISLYSIMQCSQVLILYSI. At 1838 to 1845 the chain is on the extracellular side; it reads SNKLTDNQ. The chain crosses the membrane as a helical span at residues 1846 to 1863; sequence YIFIDIVTILPLSIFMCW. The Cytoplasmic portion of the chain corresponds to 1864–1881; sequence TSASEKLSKNIPIGKLFS. A helical transmembrane segment spans residues 1882 to 1905; that stretch reads FPILISIYGQIIIQLFFVMISLVV. At 1906-1928 the chain is on the extracellular side; the sequence is LMNLSFYKYDKNKVMKEKSDDTY. A helical membrane pass occupies residues 1929 to 1952; sequence LYKAQKYTLIYSLLFSKFVYVYIF. Residues 1953–1956 are Cytoplasmic-facing; that stretch reads KYKE.

The protein belongs to the cation transport ATPase (P-type) (TC 3.A.3) family. Type V subfamily.

It is found in the membrane. It carries out the reaction ATP + H2O = ADP + phosphate + H(+). This Plasmodium falciparum protein is Probable cation-transporting ATPase 1.